Here is a 182-residue protein sequence, read N- to C-terminus: ATP synthase subunit b 1 (182 aa).

A helical transmembrane segment spans residues 24 to 44 (FADPAFWVSIAFLMVVGFVYI).

It belongs to the ATPase B chain family. F-type ATPases have 2 components, F(1) - the catalytic core - and F(0) - the membrane proton channel. F(1) has five subunits: alpha(3), beta(3), gamma(1), delta(1), epsilon(1). F(0) has three main subunits: a(1), b(2) and c(10-14). The alpha and beta chains form an alternating ring which encloses part of the gamma chain. F(1) is attached to F(0) by a central stalk formed by the gamma and epsilon chains, while a peripheral stalk is formed by the delta and b chains.

Its subcellular location is the cell inner membrane. Functionally, f(1)F(0) ATP synthase produces ATP from ADP in the presence of a proton or sodium gradient. F-type ATPases consist of two structural domains, F(1) containing the extramembraneous catalytic core and F(0) containing the membrane proton channel, linked together by a central stalk and a peripheral stalk. During catalysis, ATP synthesis in the catalytic domain of F(1) is coupled via a rotary mechanism of the central stalk subunits to proton translocation. Component of the F(0) channel, it forms part of the peripheral stalk, linking F(1) to F(0). This is ATP synthase subunit b 1 from Rhodospirillum rubrum (strain ATCC 11170 / ATH 1.1.1 / DSM 467 / LMG 4362 / NCIMB 8255 / S1).